The sequence spans 315 residues: Diacylglycerol kinase (315 aa).

Residues 1 to 132 (MRKRARIIYN…VDIGKMNNRY (132 aa)) form the DAGKc domain. Residues 10–14 (NPTSG), Thr41, 67–73 (GDGTLNE), and Thr94 each bind ATP. Mg(2+)-binding residues include Lys213, Asp216, and Tyr218. Glu273 serves as the catalytic Proton acceptor.

It belongs to the diacylglycerol/lipid kinase family. Homodimer. Mg(2+) serves as cofactor.

It carries out the reaction a 1,2-diacyl-sn-glycerol + ATP = a 1,2-diacyl-sn-glycero-3-phosphate + ADP + H(+). Catalyzes the phosphorylation of diacylglycerol (DAG) into phosphatidic acid. Is a key enzyme involved in the production of lipoteichoic acid by reintroducing DAG formed from the breakdown of membrane phospholipids into the phosphatidylglycerol biosynthetic pathway. This is Diacylglycerol kinase (dagK) from Staphylococcus aureus (strain USA300 / TCH1516).